A 137-amino-acid polypeptide reads, in one-letter code: Ribonuclease VapC3 (137 aa).

The PINc domain occupies Val-12–Ala-129. The Mg(2+) site is built by Asp-15 and Asp-105.

The protein belongs to the PINc/VapC protein family. Mg(2+) is required as a cofactor.

Its function is as follows. Toxic component of a type II toxin-antitoxin (TA) system. An RNase. Its toxic effect is neutralized by coexpression with cognate antitoxin VapB3. This chain is Ribonuclease VapC3, found in Mycobacterium tuberculosis (strain CDC 1551 / Oshkosh).